A 383-amino-acid polypeptide reads, in one-letter code: Trichodiene synthase (383 aa).

Belongs to the trichodiene synthase family.

The enzyme catalyses (2E,6E)-farnesyl diphosphate = trichodiene + diphosphate. The protein operates within sesquiterpene biosynthesis; trichothecene biosynthesis. TS is a member of the terpene cyclase group of enzymes. It catalyzes the isomerization and cyclization of farnesyl pyro-phosphate to form trichodiene, the first cyclic intermediate in the biosynthetic pathway for trichothecenes. It serves to branch trichothecene biosynthesis from the isoprenoid pathway. The chain is Trichodiene synthase (TRI5) from Stachybotrys chartarum (Toxic black mold).